Here is a 606-residue protein sequence, read N- to C-terminus: Atypical protein kinase C (606 aa).

Residues 30-113 form the PB1 domain; sequence SITVKTAYNG…SQLVIHVFPN (84 aa). A Phorbol-ester/DAG-type zinc finger spans residues 145-195; the sequence is GHIFQAKRFNRRAFCAYCQDRIWGLGRQGFKCIQCKLLVHKKCHKLVQKHC. The 269-residue stretch at 264 to 532 folds into the Protein kinase domain; it reads FELIRVIGRG…FMDIVSHPFF (269 aa). ATP-binding positions include 270–278 and lysine 293; that span reads IGRGSYAKV. Aspartate 388 functions as the Proton acceptor in the catalytic mechanism. The region spanning 533-604 is the AGC-kinase C-terminal domain; sequence KNMDWELLER…VNPLLMSLED (72 aa).

This sequence belongs to the protein kinase superfamily. AGC Ser/Thr protein kinase family. PKC subfamily. In terms of assembly, interacts with baz; the interaction is required for apical localization of aPKC in neuroblasts and epithelial cells. Interacts with Dap160; the interaction promotes aPKC apical localization and kinase activity. Interacts with and phosphorylates l(2)gl and yrt. Interacts with crb and ref(2)P. Forms a complex with baz, fz and Patj. Expressed in the testis. In spermatid cysts, localizes near the tips of spermatid flagellar axonemes (at protein level). Detectable in freshly laid eggs before onset of zygotic transcription so is deposited in the egg during oogenesis. At the cellular blastoderm stage, present in all cells except the pole cells. During gastrulation, strongly expressed in tissues undergoing morphogenetic movements such as invaginating mesoderm, proctodeum and cephalic furrow. Strongly expressed in neuroblasts.

The protein resides in the cytoplasm. It localises to the cell cortex. The protein localises to the apicolateral cell membrane. It catalyses the reaction L-seryl-[protein] + ATP = O-phospho-L-seryl-[protein] + ADP + H(+). The catalysed reaction is L-threonyl-[protein] + ATP = O-phospho-L-threonyl-[protein] + ADP + H(+). Functionally, serine/threonine protein kinase which is required for apico-basal cell polarity in the germ line as well as in epithelial and neural precursor cells, for epithelial planar cell polarity and for cell proliferation. During oocyte development, required for the posterior translocation of oocyte specification factors and for the posterior establishment of the microtubule organizing center within the presumptive oocyte. Phosphorylates l(2)gl which restricts l(2)gl activity to the oocyte posterior and regulates posterior enrichment of par-1, leading to establishment of correct oocyte polarity. Essential for apical localization of l(2)gl and par-6 in neuroblasts and for exclusion of mira from the apical cortex. Phosphorylates baz which is required for targeting of baz to the postsynaptic region where it is involved in actin organization, and for apical exclusion of baz which is necessary for establishment of the apical/lateral border in epithelial cells. Phosphorylates yrt which prevents its premature apical localization and is necessary for correct epithelial cell polarization. Required for the establishment of mitotic spindle orientation during symmetric division of epithelial cells and for apical exclusion of raps/Pins. Involved in symmetric adherens junction positioning during embryogenesis. Required for polarization of the spermatid cyst which is necessary for sperm differentiation. Required for stimulation of the Toll signaling pathway which activates Dif and dl and plays a role in innate immunity. Plays a role in memory enhancement. The polypeptide is Atypical protein kinase C (Drosophila melanogaster (Fruit fly)).